Here is a 286-residue protein sequence, read N- to C-terminus: NADH-cytochrome b5 reductase 1 (286 aa).

Residues 6–26 (FILVIIGSVALAAGVKYVFTL) form a helical membrane-spanning segment. In terms of domain architecture, FAD-binding FR-type spans 52-155 (QEYRKFQLKE…KGPKGKFNYQ (104 aa)). Residues 135–150 (DNMF…GPKG) and 161–193 (SIGM…EISL) each bind FAD.

Belongs to the flavoprotein pyridine nucleotide cytochrome reductase family. As to quaternary structure, monomer. It depends on FAD as a cofactor.

It is found in the endoplasmic reticulum membrane. The protein resides in the mitochondrion outer membrane. It carries out the reaction 2 Fe(III)-[cytochrome b5] + NADH = 2 Fe(II)-[cytochrome b5] + NAD(+) + H(+). In terms of biological role, electron donor reductase for cytochrome b5. The cytochrome b5/NADH cytochrome b5 reductase electron transfer system supports the catalytic activity of several sterol biosynthetic enzymes. This is NADH-cytochrome b5 reductase 1 (cyb5r1) from Dictyostelium discoideum (Social amoeba).